Consider the following 1843-residue polypeptide: Proteasome activator complex subunit 4 (1843 aa).

Positions 1-11 (MEPAERAGVGE) are enriched in low complexity. A disordered region spans residues 1-25 (MEPAERAGVGEPPEPGGRPEPGPRG). Positions 12 to 22 (PPEPGGRPEPG) are enriched in pro residues. HEAT repeat units follow at residues 475-519 (PEGP…LVDC) and 998-1037 (NFCC…NHSG). Residue Ser1121 is modified to Phosphoserine. HEAT repeat units lie at residues 1179–1217 (RVLP…QLKR) and 1354–1392 (DAFL…GSKH). Ser1614 carries the post-translational modification Phosphoserine. HEAT repeat units follow at residues 1636–1674 (PHQV…YNLF) and 1680–1718 (EDAV…CNFL). Residues 1650-1738 (ARSSSWHARY…EQLCKTKLPK (89 aa)) form a bromodomain-like (BRDL) region. At Ser1746 the chain carries Phosphoserine.

This sequence belongs to the BLM10 family. Homodimer. Interacts with the 20S and 26S proteasomes. Component of the spermatoproteasome, a form of the proteasome specifically found in testis.

The protein localises to the cytoplasm. The protein resides in the cytosol. It localises to the nucleus. It is found in the nucleus speckle. In terms of biological role, associated component of the proteasome that specifically recognizes acetylated histones and promotes ATP- and ubiquitin-independent degradation of core histones during spermatogenesis and DNA damage response. Recognizes and binds acetylated histones via its bromodomain-like (BRDL) region and activates the proteasome by opening the gated channel for substrate entry. Binds to the core proteasome via its C-terminus, which occupies the same binding sites as the proteasomal ATPases, opening the closed structure of the proteasome via an active gating mechanism. Component of the spermatoproteasome, a form of the proteasome specifically found in testis: binds to acetylated histones and promotes degradation of histones, thereby participating actively to the exchange of histones during spermatogenesis. Also involved in DNA damage response in somatic cells, by promoting degradation of histones following DNA double-strand breaks. This chain is Proteasome activator complex subunit 4, found in Homo sapiens (Human).